We begin with the raw amino-acid sequence, 323 residues long: Aspartate carbamoyltransferase catalytic subunit (323 aa).

Positions 71 and 72 each coordinate carbamoyl phosphate. An L-aspartate-binding site is contributed by K99. 3 residues coordinate carbamoyl phosphate: R121, H151, and Q154. 2 residues coordinate L-aspartate: R184 and R239. Carbamoyl phosphate-binding residues include G280 and P281.

It belongs to the aspartate/ornithine carbamoyltransferase superfamily. ATCase family. Heterododecamer (2C3:3R2) of six catalytic PyrB chains organized as two trimers (C3), and six regulatory PyrI chains organized as three dimers (R2).

The enzyme catalyses carbamoyl phosphate + L-aspartate = N-carbamoyl-L-aspartate + phosphate + H(+). Its pathway is pyrimidine metabolism; UMP biosynthesis via de novo pathway; (S)-dihydroorotate from bicarbonate: step 2/3. Functionally, catalyzes the condensation of carbamoyl phosphate and aspartate to form carbamoyl aspartate and inorganic phosphate, the committed step in the de novo pyrimidine nucleotide biosynthesis pathway. This Cupriavidus pinatubonensis (strain JMP 134 / LMG 1197) (Cupriavidus necator (strain JMP 134)) protein is Aspartate carbamoyltransferase catalytic subunit.